The chain runs to 215 residues: Guanylate kinase (215 aa).

The Guanylate kinase-like domain maps to 9–187 (GTLYIVSAPS…ALDELSCLVH (179 aa)). 16–23 (APSGAGKT) serves as a coordination point for ATP.

The protein belongs to the guanylate kinase family.

It is found in the cytoplasm. It carries out the reaction GMP + ATP = GDP + ADP. Essential for recycling GMP and indirectly, cGMP. This Chromohalobacter salexigens (strain ATCC BAA-138 / DSM 3043 / CIP 106854 / NCIMB 13768 / 1H11) protein is Guanylate kinase.